A 240-amino-acid polypeptide reads, in one-letter code: Transcription factor bHLH101 (240 aa).

In terms of domain architecture, bHLH spans 65-117 (EKKLNHNASERDRRRKLNALYSSLRALLPLSDQKRKLSIPMTVARVVKYIPEQ).

Homodimer. As to expression, flowers.

It localises to the nucleus. This chain is Transcription factor bHLH101 (BHLH101), found in Arabidopsis thaliana (Mouse-ear cress).